The chain runs to 937 residues: MAAMECRDKAVVPPRRLVQARLPFKRLNPVPKEKHDAEAEGKKGKCSKSGLGQSKDSSTDTLHASTDNMENDCQLNSDVNFVPKLVNGKGPLDHFIQKSTKDNTDEIIVIIDSVDESNQRLSDDVDHVSFDSKASSAALTNGMLGKDMNKLSCLNSTQNSQTDDSMQTDVPCEAIANKGEDLVDGIQSCSGLTERNNLENTKVNQSELKDVIFEGKMPVVLLEDIMAAKSPQVTSLDGSVTSENETVELSHEGDSVLTNSSLSSLSVSSPEAQPVAETKRNTSPLAVSTPVRKVSQKLHKSSAEKEKLRLQRDQERADKLQKLQAEREEKGRLKEEAKAAKERAKEEAKKKKEEEKELKERERREKKEKEEKEKAEKLRVKEEKRKERQEALEAKLEEKRKKEEEKRLKEEEKRINAQKAEITRFFQKPKTPQAPKILAGSCGKFAPFEIKENMVLAPLCRIALYPDFLEQLDRLLRAQNSEVSFLRDLKCRKPRKTGPTFVNSSTDTVNSDVVVVDNCKTDAVPERGKFGRMKLLQFCENHRPAYWGTWNKKTTMIRPRNPWSKDSKLLDYEVDSDEEWEEEEPGESLSHSEGDDEEEGEDEDDDDGFFIPHGYLSEDEGVTEECDPENQKVRQKLKAKEWDELMAKGKRLHVLQPVKIGCIWESAQNDSGTNADLKILQQFTACILDSSVAEEEQQIQKCSKKRAKDQQILGQLLPLLHGNVNGSKVIIQEFQECCRQGLFSDVTAATDCGDTSPVSPNTSRPQTPVGEDSGVPSKARLKRIISENSVYEKRPEYRMCWYVHSEVLKSFDQEHLPVPCQWNYITQVPSSGKEDGGSVPGVAPVQSTPVSVKRKSTGSMCITKFMKRPRDAEQAEAMEMDGFQADTEEDEDDDDCMIVDVQPCKDSTLTVTETAPESRGTTAAHQDASMVSPSNTV.

A disordered region spans residues 21-69 (RLPFKRLNPVPKEKHDAEAEGKKGKCSKSGLGQSKDSSTDTLHASTDNM). Over residues 31–43 (PKEKHDAEAEGKK) the composition is skewed to basic and acidic residues. Residues 59–69 (TDTLHASTDNM) are compositionally biased toward polar residues. The short motif at 213 to 226 (FEGKMPVVLLEDIM) is the PxVxL motif element. 5 disordered regions span residues 250-386 (SHEG…EKRK), 574-614 (VDSD…IPHG), 753-778 (GDTS…VPSK), 831-851 (SGKE…TPVS), and 910-937 (TVTE…SNTV). A compositionally biased stretch (low complexity) spans 255 to 269 (SVLTNSSLSSLSVSS). Basic and acidic residues predominate over residues 301–386 (SSAEKEKLRL…KLRVKEEKRK (86 aa)). Composition is skewed to acidic residues over residues 574-586 (VDSD…EEPG) and 594-608 (GDDE…DDDG). A compositionally biased stretch (polar residues) spans 756 to 766 (SPVSPNTSRPQ).

This sequence belongs to the CHAF1A family. In terms of assembly, subunit of the CAF-1 complex that contains RBBP4, CHAF1B and CHAF1A. Interacts with CHAF1B, PCNA and RBBP4.

The protein resides in the nucleus. In terms of biological role, acts as a component of the histone chaperone complex chromatin assembly factor 1 (CAF-1), which assembles histone octamers onto DNA during replication and repair. CAF-1 performs the first step of the nucleosome assembly process, bringing newly synthesized histones H3 and H4 to replicating DNA; histones H2A/H2B can bind to this chromatin precursor subsequent to DNA replication to complete the histone octamer. In Gallus gallus (Chicken), this protein is Chromatin assembly factor 1 subunit A (CHAF1A).